The primary structure comprises 360 residues: MIIWLAELLQPYFSFFRLFEYLSFRAILSVLTALGLSLWMGPRLIKRLQLLQIGQVVRNEGPESHFSKRGTPTMGGVMILAAISITILLWANLSNPYVWAVLAVLMGYGAVGFVDDYRKVVRKNTDGLIARWKYFWQSAIALIVAFALYAYGKDTAATQLVVPFFKDVMPQLGLMYIVLTYFVIVGTSNAVNLTDGLDGLAIMPTVLVAAGFAVIAWATGNVNFSQYLHIPYLPHASELVVVCTAIVGAGLGFLWFNTYPAQVFMGDVGSLALGGALGTIAVLVRQELVLVIMGGVFVMETLSVILQVGSYKLRGQRIFRMAPIHHHYELKGWPEPRVIVRFWIISMVLVLIGLATLKVR.

The next 10 helical transmembrane spans lie at 21 to 41, 73 to 93, 94 to 114, 132 to 152, 168 to 188, 199 to 219, 236 to 256, 263 to 283, 288 to 308, and 338 to 358; these read YLSFRAILSVLTALGLSLWMG, TMGGVMILAAISITILLWANL, SNPYVWAVLAVLMGYGAVGFV, WKYFWQSAIALIVAFALYAYG, VMPQLGLMYIVLTYFVIVGTS, GLAIMPTVLVAAGFAVIAWAT, ASELVVVCTAIVGAGLGFLWF, VFMGDVGSLALGGALGTIAVL, LVLVIMGGVFVMETLSVILQV, and VIVRFWIISMVLVLIGLATLK.

The protein belongs to the glycosyltransferase 4 family. MraY subfamily. The cofactor is Mg(2+).

It localises to the cell inner membrane. The enzyme catalyses UDP-N-acetyl-alpha-D-muramoyl-L-alanyl-gamma-D-glutamyl-meso-2,6-diaminopimeloyl-D-alanyl-D-alanine + di-trans,octa-cis-undecaprenyl phosphate = di-trans,octa-cis-undecaprenyl diphospho-N-acetyl-alpha-D-muramoyl-L-alanyl-D-glutamyl-meso-2,6-diaminopimeloyl-D-alanyl-D-alanine + UMP. Its pathway is cell wall biogenesis; peptidoglycan biosynthesis. In terms of biological role, catalyzes the initial step of the lipid cycle reactions in the biosynthesis of the cell wall peptidoglycan: transfers peptidoglycan precursor phospho-MurNAc-pentapeptide from UDP-MurNAc-pentapeptide onto the lipid carrier undecaprenyl phosphate, yielding undecaprenyl-pyrophosphoryl-MurNAc-pentapeptide, known as lipid I. This Vibrio vulnificus (strain CMCP6) protein is Phospho-N-acetylmuramoyl-pentapeptide-transferase.